Consider the following 128-residue polypeptide: Glycine cleavage system H protein (128 aa).

Residues 22-104 (TVLVGITDYA…YGEGWIFRLK (83 aa)) form the Lipoyl-binding domain. K63 bears the N6-lipoyllysine mark.

Belongs to the GcvH family. In terms of assembly, the glycine cleavage system is composed of four proteins: P, T, L and H. (R)-lipoate is required as a cofactor.

In terms of biological role, the glycine cleavage system catalyzes the degradation of glycine. The H protein shuttles the methylamine group of glycine from the P protein to the T protein. This is Glycine cleavage system H protein from Thermus thermophilus (strain ATCC BAA-163 / DSM 7039 / HB27).